Reading from the N-terminus, the 341-residue chain is Ribonucleoside-diphosphate reductase small chain A (341 aa).

Residues 1 to 20 (MGSLKEGQGRDMEEGESEEP) form a disordered region. Positions 87, 118, and 121 each coordinate Fe cation. Tyrosine 125 is a catalytic residue. Glutamate 180, glutamate 214, and histidine 217 together coordinate Fe cation.

It belongs to the ribonucleoside diphosphate reductase small chain family. In terms of assembly, homodimer and heterodimer with TSO2. Heterotetramer of two R1 and two R2 chains. A radical transfer pathway may occur between Tyr-125 of protein R2 and R1. Homodimer contains a dinuclear non-heme iron center and a stable tyrosyl radical essential for activity. A transfer pathway may occur between Tyr-125 of protein R2 and R1. Interacts with CSN7. The cofactor is Fe cation. In terms of tissue distribution, expressed in rosette leaves, cauline leaves, stems and flowers.

The protein resides in the cytoplasm. It carries out the reaction a 2'-deoxyribonucleoside 5'-diphosphate + [thioredoxin]-disulfide + H2O = a ribonucleoside 5'-diphosphate + [thioredoxin]-dithiol. With respect to regulation, inhibited by phenol, paracetamol, 2,4,6-trimethylphenol, resveratrol, furfuryl mercaptan, 2-thiophenthiol, phenylhydrazine, and hydroxyurea. Provides the precursors necessary for DNA synthesis. Catalyzes the biosynthesis of deoxyribonucleotides from the corresponding ribonucleotides. The polypeptide is Ribonucleoside-diphosphate reductase small chain A (RNR2A) (Arabidopsis thaliana (Mouse-ear cress)).